A 276-amino-acid chain; its full sequence is Glutamate 5-kinase (276 aa).

Residue Lys-14 coordinates ATP. Substrate is bound by residues Ser-54, Asp-141, and Asn-157. ATP-binding positions include 177–178 (SD) and 219–225 (TGGMLTK).

Belongs to the glutamate 5-kinase family.

Its subcellular location is the cytoplasm. It catalyses the reaction L-glutamate + ATP = L-glutamyl 5-phosphate + ADP. It participates in amino-acid biosynthesis; L-proline biosynthesis; L-glutamate 5-semialdehyde from L-glutamate: step 1/2. Its function is as follows. Catalyzes the transfer of a phosphate group to glutamate to form L-glutamate 5-phosphate. This Listeria monocytogenes serotype 4b (strain CLIP80459) protein is Glutamate 5-kinase.